A 305-amino-acid chain; its full sequence is RxLR effector protein 17 (305 aa).

The first 24 residues, 1–24 (MQSILWFALIASVVFLVLVDLASG), serve as a signal peptide directing secretion. Residues 45-60 (RLLRAAHLDRKLSEER) carry the RxLR-dEER motif. Asn207 and Asn227 each carry an N-linked (GlcNAc...) asparagine glycan. A w motif region spans residues 247–269 (LHLKWAVEAKSPKDVVERILKDL).

This sequence belongs to the RxLR effector family. In terms of assembly, interacts with host A.thaliana At1G14340.

It localises to the secreted. It is found in the host cell membrane. In terms of biological role, secreted effector that confers enhanced plant susceptibility during both compatible and incompatible interactions between the pathogen and its host. Promotes the sexual reproduction of the pathogen in the plant host. This Hyaloperonospora arabidopsidis (strain Emoy2) (Downy mildew agent) protein is RxLR effector protein 17.